Consider the following 433-residue polypeptide: Homogentisate 1,2-dioxygenase (433 aa).

The Proton acceptor role is filled by H288. Fe cation is bound by residues H331 and E337. Homogentisate is bound by residues Y346 and H367. H367 is a binding site for Fe cation.

This sequence belongs to the homogentisate dioxygenase family. Hexamer; dimer of trimers. Fe cation serves as cofactor.

The catalysed reaction is homogentisate + O2 = 4-maleylacetoacetate + H(+). Its pathway is amino-acid degradation; L-phenylalanine degradation; acetoacetate and fumarate from L-phenylalanine: step 4/6. Involved in the catabolism of homogentisate (2,5-dihydroxyphenylacetate or 2,5-OH-PhAc), a central intermediate in the degradation of phenylalanine and tyrosine. Catalyzes the oxidative ring cleavage of the ar omatic ring of 2,5-dihydroxyphenylacetate to yield maleylacetoacetate. This is Homogentisate 1,2-dioxygenase from Pseudomonas putida (strain ATCC 47054 / DSM 6125 / CFBP 8728 / NCIMB 11950 / KT2440).